The sequence spans 189 residues: Interferon alpha-1 (189 aa).

The signal sequence occupies residues Met1–Gly23. 2 disulfides stabilise this stretch: Cys24–Cys122 and Cys52–Cys162.

This sequence belongs to the alpha/beta interferon family. Interacts with CR2.

It is found in the secreted. Its function is as follows. Produced by macrophages, IFN-alpha have antiviral activities. Interferon stimulates the production of two enzymes: a protein kinase and an oligoadenylate synthetase. This is Interferon alpha-1 from Bos taurus (Bovine).